The following is a 77-amino-acid chain: Protein AC145 (77 aa).

It localises to the host nucleus. Its subcellular location is the virion. Functionally, plays a role in primary oral infection of the host. This Autographa californica nuclear polyhedrosis virus (AcMNPV) protein is Protein AC145.